We begin with the raw amino-acid sequence, 251 residues long: MPRLEEHCWSCSCSTSVKTKDLSSAGWIVCKTGEMMSIITSVLSHAYGSLHSLQSANLIRRGLVLFIVGVVLALVLNLLQIQRNVTLFPEEVLDTLFSSAWWIPLCCGTAAAVVGLLYPCLDHHLGEPHKFKREWASVMRCIAVFVGINHASAKLDFANNVQLSLTLAALSLGLWWTFDRSRSGFGLGLTTALLATLIAQLLVYNGIYQYTSPDFLYVRSWLPCIFFSGGVTVGNIGRQLAMGSTEKIHND.

Residues 1–58 lie on the Cytoplasmic side of the membrane; sequence MPRLEEHCWSCSCSTSVKTKDLSSAGWIVCKTGEMMSIITSVLSHAYGSLHSLQSANL. A helical transmembrane segment spans residues 59–81; the sequence is IRRGLVLFIVGVVLALVLNLLQI. At 82–100 the chain is on the extracellular side; sequence QRNVTLFPEEVLDTLFSSA. Residues 101–118 form a helical membrane-spanning segment; it reads WWIPLCCGTAAAVVGLLY. At 119–133 the chain is on the cytoplasmic side; it reads PCLDHHLGEPHKFKR. The chain crosses the membrane as a helical span at residues 134-156; the sequence is EWASVMRCIAVFVGINHASAKLD. The Extracellular segment spans residues 157-159; the sequence is FAN. A helical membrane pass occupies residues 160–178; sequence NVQLSLTLAALSLGLWWTF. Topologically, residues 179–183 are cytoplasmic; sequence DRSRS. A helical membrane pass occupies residues 184 to 205; sequence GFGLGLTTALLATLIAQLLVYN. At 206–219 the chain is on the extracellular side; the sequence is GIYQYTSPDFLYVR. The chain crosses the membrane as a helical span at residues 220-237; sequence SWLPCIFFSGGVTVGNIG. The Cytoplasmic segment spans residues 238–251; sequence RQLAMGSTEKIHND. The KxHxx motif lies at 245–251; that stretch reads TEKIHND.

The protein belongs to the INSIG family. Interacts with scap; interaction is direct and only takes place in the presence of sterols; it prevents interaction between scap and the coat protein complex II (COPII). Associates with the SCAP-SREBP complex; association is mediated via its interaction with scap and only takes place in the presence of sterols.

It is found in the endoplasmic reticulum membrane. Oxysterol-binding protein that mediates feedback control of cholesterol synthesis by controlling both endoplasmic reticulum to Golgi transport of scap and degradation of hmgcr. Acts as a negative regulator of cholesterol biosynthesis by mediating the retention of the SCAP-SREBP complex in the endoplasmic reticulum, thereby blocking the processing of sterol regulatory element-binding proteins (SREBPs). Binds oxysterol, including 25-hydroxycholesterol, regulating interaction with scap and retention of the SCAP-SREBP complex in the endoplasmic reticulum. In presence of oxysterol, interacts with scap, retaining the SCAP-SREBP complex in the endoplasmic reticulum, thereby preventing scap from escorting SREBPs to the Golgi. Sterol deprivation reduces oxysterol-binding, disrupting the interaction between insig1 and scap, thereby promoting Golgi transport of the SCAP-SREBP complex, followed by processing and nuclear translocation of SREBPs. Also regulates cholesterol synthesis by regulating degradation of hmgcr. In Danio rerio (Zebrafish), this protein is Insulin-induced gene 1 protein.